A 134-amino-acid chain; its full sequence is Cytochrome b (134 aa).

The next 3 helical transmembrane spans lie at 33-53, 77-98, and 113-133; these read FGSL…FLAM, WVLR…YVHV, and WNVG…GYVL. Residues His83 and His97 each coordinate heme b.

The protein belongs to the cytochrome b family. The cytochrome bc1 complex contains 11 subunits: 3 respiratory subunits (MT-CYB, CYC1 and UQCRFS1), 2 core proteins (UQCRC1 and UQCRC2) and 6 low-molecular weight proteins (UQCRH/QCR6, UQCRB/QCR7, UQCRQ/QCR8, UQCR10/QCR9, UQCR11/QCR10 and a cleavage product of UQCRFS1). This cytochrome bc1 complex then forms a dimer. The cofactor is heme b.

The protein localises to the mitochondrion inner membrane. Its function is as follows. Component of the ubiquinol-cytochrome c reductase complex (complex III or cytochrome b-c1 complex) that is part of the mitochondrial respiratory chain. The b-c1 complex mediates electron transfer from ubiquinol to cytochrome c. Contributes to the generation of a proton gradient across the mitochondrial membrane that is then used for ATP synthesis. This chain is Cytochrome b (MT-CYB), found in Anoura caudifer (Hairy-legged long-tongued bat).